Consider the following 490-residue polypeptide: Dual specificity protein kinase CLK3 (490 aa).

The tract at residues 1-138 (MHHCKRYRSP…SKRSSRSVED (138 aa)) is disordered. Tyrosine 7 carries the post-translational modification Phosphotyrosine. 6 positions are modified to phosphoserine: serine 9, serine 49, serine 51, serine 67, serine 76, and serine 78. Composition is skewed to basic and acidic residues over residues 26-56 (YSRE…DRLP) and 63-76 (ERRD…EERS). Residues 88–116 (RSRHRRRSRERGPYRTRKHAHHCHKRRTR) are compositionally biased toward basic residues. Positions 117-130 (SCSSASSRSQQSSK) are enriched in low complexity. Phosphoserine is present on serine 135. Residues 156 to 472 (YEIVGNLGEG…LAEALLHPFF (317 aa)) form the Protein kinase domain. ATP contacts are provided by residues 162-170 (LGEGTFGKV) and lysine 186. Aspartate 283 acts as the Proton acceptor in catalysis.

It belongs to the protein kinase superfamily. CMGC Ser/Thr protein kinase family. Lammer subfamily. Post-translationally, autophosphorylates on all three types of residues. As to expression, endothelial cells.

The protein localises to the nucleus. Its subcellular location is the cytoplasm. The protein resides in the cytoplasmic vesicle. It localises to the secretory vesicle. It is found in the acrosome. The protein localises to the nucleus speckle. The enzyme catalyses L-seryl-[protein] + ATP = O-phospho-L-seryl-[protein] + ADP + H(+). It catalyses the reaction L-threonyl-[protein] + ATP = O-phospho-L-threonyl-[protein] + ADP + H(+). It carries out the reaction L-tyrosyl-[protein] + ATP = O-phospho-L-tyrosyl-[protein] + ADP + H(+). Its activity is regulated as follows. Leucettine L41 inhibits its kinase activity and affects the regulation of alternative splicing mediated by phosphorylation of SR proteins. Its function is as follows. Dual specificity kinase acting on both serine/threonine and tyrosine-containing substrates. Phosphorylates serine- and arginine-rich (SR) proteins of the spliceosomal complex. May be a constituent of a network of regulatory mechanisms that enable SR proteins to control RNA splicing and can cause redistribution of SR proteins from speckles to a diffuse nucleoplasmic distribution. Phosphorylates SRSF1 and SRSF3. Regulates the alternative splicing of tissue factor (F3) pre-mRNA in endothelial cells. This Homo sapiens (Human) protein is Dual specificity protein kinase CLK3.